The primary structure comprises 182 residues: Orotate phosphoribosyltransferase (182 aa).

Residues R91, K92, K95, H97, and 117-125 (EDVTTTGGS) contribute to the 5-phospho-alpha-D-ribose 1-diphosphate site. Orotate-binding residues include T121 and R149.

Belongs to the purine/pyrimidine phosphoribosyltransferase family. PyrE subfamily. In terms of assembly, homodimer. Requires Mg(2+) as cofactor.

The catalysed reaction is orotidine 5'-phosphate + diphosphate = orotate + 5-phospho-alpha-D-ribose 1-diphosphate. Its pathway is pyrimidine metabolism; UMP biosynthesis via de novo pathway; UMP from orotate: step 1/2. Its function is as follows. Catalyzes the transfer of a ribosyl phosphate group from 5-phosphoribose 1-diphosphate to orotate, leading to the formation of orotidine monophosphate (OMP). This chain is Orotate phosphoribosyltransferase, found in Pyrococcus abyssi (strain GE5 / Orsay).